A 136-amino-acid chain; its full sequence is Calcitonin (136 aa).

The N-terminal stretch at 1 to 25 (MGFLKFSPFLVVSILLLYQACGLQA) is a signal peptide. Positions 26-82 (VPLRSTLESSPGMATLSEEEARLLAALVQNYMQMKVRELEQEEEQEAEGSSLDSPRS) are excised as a propeptide. Ser42 is modified (phosphoserine). A disordered region spans residues 64–84 (LEQEEEQEAEGSSLDSPRSKR). Residues Cys85 and Cys91 are joined by a disulfide bond. Asn87 carries N-linked (GlcNAc...) asparagine glycosylation. A disordered region spans residues 114–136 (GAPGKKRDMAKDLETNHHPYFGN). Pro116 bears the Proline amide mark. Over residues 118–130 (KKRDMAKDLETNH) the composition is skewed to basic and acidic residues. The propeptide occupies 121 to 136 (DMAKDLETNHHPYFGN).

This sequence belongs to the calcitonin family.

It localises to the secreted. Its function is as follows. Calcitonin is a peptide hormone that causes a rapid but short-lived drop in the level of calcium and phosphate in blood by promoting the incorporation of those ions in the bones. Calcitonin function is mediated by the calcitonin receptor/CALCR and the CALCR-RAMP2 (AMYR2) receptor complex. This Rattus norvegicus (Rat) protein is Calcitonin.